Here is a 175-residue protein sequence, read N- to C-terminus: Protein MODIFYING WALL LIGNIN-1 (175 aa).

Positions 1 to 24 are cleaved as a signal peptide; that stretch reads MFIFLFGLAAFFLCLSAEFQKAKA. The Cytoplasmic segment spans residues 25-52; the sequence is LLRAQVFLKGKDLKWDGESCYLPENRAF. The chain crosses the membrane as a helical span at residues 53–73; sequence GLGIAALVCVSVAQIVGNVVI. Topologically, residues 74–86 are extracellular; sequence CRGFTKTDKTRTT. The helical transmembrane segment at 87 to 107 threads the bilayer; sequence IFCIILLLFSWVNFAVAVTLI. Over 108-135 the chain is Cytoplasmic; the sequence is SVGASMNREQIYGKGWLNRECYLVKDGV. A helical membrane pass occupies residues 136 to 156; that stretch reads FAASGFLSVTTMAAILGAFAF. Over 157-175 the chain is Extracellular; the sequence is KVKPSLQVENHDKRHTQNV.

This sequence belongs to the DESIGUAL family. Interacts with CRK19.

It is found in the cell membrane. In terms of biological role, together with MWL2, contributes to secondary cell wall biology, specifically lignin biosynthesis. The sequence is that of Protein MODIFYING WALL LIGNIN-1 from Arabidopsis thaliana (Mouse-ear cress).